We begin with the raw amino-acid sequence, 450 residues long: Trehalose/maltose-binding protein MalE (450 aa).

Residues 1–24 form the signal peptide; the sequence is MNVKKVLLGLFLVGVLGIAVVASG. Glu-57, Thr-84, Arg-89, Asp-110, Tyr-161, Asp-163, Tyr-217, Glu-279, Trp-297, Tyr-299, Gly-334, Trp-335, Trp-371, and Arg-404 together coordinate alpha,alpha-trehalose.

The protein belongs to the bacterial solute-binding protein 1 family. As to quaternary structure, the complex is composed of two ATP-binding proteins (MalK), two transmembrane proteins (MalG and MalF) and a solute-binding protein (MalE). Post-translationally, glycosylated.

The protein localises to the cell membrane. Functionally, part of the ABC transporter complex MalEFGK involved in trehalose/maltose import. Binds maltose and trehalose. In Thermococcus litoralis (strain ATCC 51850 / DSM 5473 / JCM 8560 / NS-C), this protein is Trehalose/maltose-binding protein MalE (malE).